The primary structure comprises 1205 residues: Plasma membrane calcium-transporting ATPase 1 (1205 aa).

At 2-104 the chain is on the cytoplasmic side; it reads GDMANNSVAY…KTFLQLVWEA (103 aa). The tract at residues 94-111 is calmodulin-binding subdomain A; that stretch reads PKTFLQLVWEALQDVTLI. A helical transmembrane segment spans residues 105 to 125; the sequence is LQDVTLIILEIAAVVSLGLSF. At 126-153 the chain is on the extracellular side; it reads YQPPGGNEALCGSVNVGEEEEESEAGWI. Residues 154–174 traverse the membrane as a helical segment; that stretch reads EGAAILLSVVCVVLVTAFNDW. The Cytoplasmic portion of the chain corresponds to 175-351; it reads SKEKQFRGLQ…KEKSVLQGKL (177 aa). The segment at 296–343 is disordered; that stretch reads EEEKEKEKKDKKTKAQDGAAMEMQPLKSEDGVDGDEKDKKRSNLPKKE. Composition is skewed to basic and acidic residues over residues 300–310 and 322–343; these read EKEKKDKKTKA and KSED…PKKE. Residues 352 to 371 traverse the membrane as a helical segment; it reads TKLAVQIGKAGLLMSAITVI. At 372–403 the chain is on the extracellular side; sequence ILVLYFVIDTSWVQKRPWLAECTPIYIQYFVK. A helical membrane pass occupies residues 404-424; it reads FFIIGVTVLVVAVPEGLPLAV. Residues 425-840 lie on the Cytoplasmic side of the membrane; it reads TISLAYSVKK…RNVYDSISKF (416 aa). Catalysis depends on Asp-460, which acts as the 4-aspartylphosphate intermediate. Residues Asp-460, Thr-462, and Asp-782 each contribute to the Mg(2+) site. A helical transmembrane segment spans residues 841–861; the sequence is LQFQLTVNVVAVIVAFTGACI. The Extracellular segment spans residues 862–868; it reads TQDSPLK. The chain crosses the membrane as a helical span at residues 869–889; it reads AVQMLWVNLIMDTLASLALAT. Residues 890–912 lie on the Cytoplasmic side of the membrane; the sequence is EPPTEALLLRKPYGRNKPLISRT. The chain crosses the membrane as a helical span at residues 913–933; that stretch reads MMKNILGHAFYQLVVVFTLLF. Residues 934–956 are Extracellular-facing; the sequence is AGEKIFDIDSGRNAPLHAPPSEH. A helical transmembrane segment spans residues 957-976; sequence YTIVFNTFVMMQLFNEINAR. Residues 977–990 lie on the Cytoplasmic side of the membrane; that stretch reads KIHGERNVFEGIFN. A helical transmembrane segment spans residues 991-1012; the sequence is NAIFCTIVLGTFVVQIIIVQFG. At 1013-1024 the chain is on the extracellular side; sequence GKPFSCSKLSIE. The helical transmembrane segment at 1025 to 1045 threads the bilayer; it reads QWLWSVFLGMGTLLWGQLIST. Residues 1046–1205 are Cytoplasmic-facing; that stretch reads IPTSRLKFLK…SPLHSLETSL (160 aa). Residue Thr-1101 is modified to Phosphothreonine; by PKC. Residues 1145–1205 are disordered; the sequence is PLIDDTDAED…SPLHSLETSL (61 aa). Residues 1183-1205 are compositionally biased toward polar residues; the sequence is TDMNKSATSSSPGSPLHSLETSL.

Belongs to the cation transport ATPase (P-type) (TC 3.A.3) family. Type IIB subfamily.

It localises to the cell membrane. The enzyme catalyses Ca(2+)(in) + ATP + H2O = Ca(2+)(out) + ADP + phosphate + H(+). In terms of biological role, catalyzes the hydrolysis of ATP coupled with the transport of calcium from the cytoplasm to the extracellular space thereby maintaining intracellular calcium homeostasis. This chain is Plasma membrane calcium-transporting ATPase 1, found in Gallus gallus (Chicken).